The chain runs to 39 residues: uncharacterized protein (39 aa).

This sequence belongs to the orthopoxvirus A30.5 protein family.

This is an uncharacterized protein from Bos taurus (Bovine).